A 164-amino-acid chain; its full sequence is R-phycoerythrin alpha chain (164 aa).

Residues C82 and C139 each coordinate (2R,3E)-phycoerythrobilin.

Belongs to the phycobiliprotein family. In terms of assembly, heterodimer of an alpha and a beta chain. In terms of processing, contains two covalently linked bilin chromophores.

The protein localises to the plastid. Its subcellular location is the chloroplast thylakoid membrane. Its function is as follows. Light-harvesting photosynthetic bile pigment-protein from the phycobiliprotein complex. This chain is R-phycoerythrin alpha chain (cpeA), found in Porphyra purpurea (Red seaweed).